The chain runs to 140 residues: Mediator of RNA polymerase II transcription subunit 21 (140 aa).

A coiled-coil region spans residues 52–130; the sequence is EERERTLEEL…CDELILKLAQ (79 aa).

Belongs to the Mediator complex subunit 21 family. As to quaternary structure, component of the Mediator complex.

It localises to the nucleus. Component of the Mediator complex, a coactivator involved in the regulated transcription of nearly all RNA polymerase II-dependent genes. Mediator functions as a bridge to convey information from gene-specific regulatory proteins to the basal RNA polymerase II transcription machinery. Mediator is recruited to promoters by direct interactions with regulatory proteins and serves as a scaffold for the assembly of a functional preinitiation complex with RNA polymerase II and the general transcription factors. The protein is Mediator of RNA polymerase II transcription subunit 21 (SRB7) of Yarrowia lipolytica (strain CLIB 122 / E 150) (Yeast).